We begin with the raw amino-acid sequence, 413 residues long: Clamp protein VP6 (413 aa).

Belongs to the reoviridae clamp protein family. As to quaternary structure, interacts with capsid proteins VP3, VP4 and VP7.

Its subcellular location is the virion. Located at the interface of the incomplete T=13 outer capsid and the pseudo T=2 inner capsid, 120 VP6 subunits clamp and stabilize the inner capsid shell. The protein is Clamp protein VP6 (S8) of Ctenopharyngodon idella (Grass carp).